Here is a 22-residue protein sequence, read N- to C-terminus: AVAGEKLWLLPHLLKMLLTPTP.

As to expression, expressed by the venom gland.

It localises to the secreted. Antibacterial peptide. Acts on the Mycobacterium abscessus subsp. massiliense cell wall. Reduces 40-50% of the bacterial load in macrophages infected with different M.abscessus strains. Is not cytotoxic towards mammalian cells, and shows no hemolytic activity against human erythrocytes. In vivo, reduces the bacterial load in the lungs, spleen, and liver of highly susceptible mice intravenously infected with M.abscessus. This is Polydim-I from Polybia dimorpha (Neotropical wasp).